Consider the following 61-residue polypeptide: Small ribosomal subunit protein uS14 (61 aa).

Residues C24, C27, C40, and C43 each coordinate Zn(2+).

The protein belongs to the universal ribosomal protein uS14 family. Zinc-binding uS14 subfamily. As to quaternary structure, part of the 30S ribosomal subunit. Contacts proteins S3 and S10. The cofactor is Zn(2+).

Its function is as follows. Binds 16S rRNA, required for the assembly of 30S particles and may also be responsible for determining the conformation of the 16S rRNA at the A site. The polypeptide is Small ribosomal subunit protein uS14 (Heliobacterium modesticaldum (strain ATCC 51547 / Ice1)).